The primary structure comprises 390 residues: Dual-specificity RNA methyltransferase RlmN (390 aa).

Glutamate 110 serves as the catalytic Proton acceptor. Residues glutamate 116 to aspartate 355 enclose the Radical SAM core domain. Cysteine 123 and cysteine 360 form a disulfide bridge. 3 residues coordinate [4Fe-4S] cluster: cysteine 130, cysteine 134, and cysteine 137. Residues glycine 184 to glutamate 185, serine 216, serine 238 to histidine 240, and asparagine 317 contribute to the S-adenosyl-L-methionine site. Cysteine 360 functions as the S-methylcysteine intermediate in the catalytic mechanism.

This sequence belongs to the radical SAM superfamily. RlmN family. The cofactor is [4Fe-4S] cluster.

The protein localises to the cytoplasm. It carries out the reaction adenosine(2503) in 23S rRNA + 2 reduced [2Fe-2S]-[ferredoxin] + 2 S-adenosyl-L-methionine = 2-methyladenosine(2503) in 23S rRNA + 5'-deoxyadenosine + L-methionine + 2 oxidized [2Fe-2S]-[ferredoxin] + S-adenosyl-L-homocysteine. The enzyme catalyses adenosine(37) in tRNA + 2 reduced [2Fe-2S]-[ferredoxin] + 2 S-adenosyl-L-methionine = 2-methyladenosine(37) in tRNA + 5'-deoxyadenosine + L-methionine + 2 oxidized [2Fe-2S]-[ferredoxin] + S-adenosyl-L-homocysteine. Its function is as follows. Specifically methylates position 2 of adenine 2503 in 23S rRNA and position 2 of adenine 37 in tRNAs. m2A2503 modification seems to play a crucial role in the proofreading step occurring at the peptidyl transferase center and thus would serve to optimize ribosomal fidelity. This chain is Dual-specificity RNA methyltransferase RlmN, found in Haemophilus influenzae (strain PittEE).